Here is a 394-residue protein sequence, read N- to C-terminus: Phosphoglycerate kinase (394 aa).

Substrate-binding positions include 21–23 (DLN), 59–62 (HLGR), arginine 117, and arginine 150. ATP contacts are provided by residues lysine 201, glutamate 318, and 344-347 (GGDT).

It belongs to the phosphoglycerate kinase family. In terms of assembly, monomer.

It localises to the cytoplasm. The enzyme catalyses (2R)-3-phosphoglycerate + ATP = (2R)-3-phospho-glyceroyl phosphate + ADP. The protein operates within carbohydrate degradation; glycolysis; pyruvate from D-glyceraldehyde 3-phosphate: step 2/5. The protein is Phosphoglycerate kinase of Blochmanniella pennsylvanica (strain BPEN).